The sequence spans 273 residues: Putative phosphoenolpyruvate synthase regulatory protein (273 aa).

Residue 153–160 (AVSRAGKT) coordinates ADP.

The protein belongs to the pyruvate, phosphate/water dikinase regulatory protein family. PSRP subfamily.

It catalyses the reaction [pyruvate, water dikinase] + ADP = [pyruvate, water dikinase]-phosphate + AMP + H(+). It carries out the reaction [pyruvate, water dikinase]-phosphate + phosphate + H(+) = [pyruvate, water dikinase] + diphosphate. In terms of biological role, bifunctional serine/threonine kinase and phosphorylase involved in the regulation of the phosphoenolpyruvate synthase (PEPS) by catalyzing its phosphorylation/dephosphorylation. This chain is Putative phosphoenolpyruvate synthase regulatory protein, found in Xanthomonas campestris pv. campestris (strain 8004).